The chain runs to 266 residues: Protein-ADP-ribose hydrolase (266 aa).

The Macro domain occupies 74–265; sequence TDLKDLKPIK…LYKEALNRDA (192 aa). ADP-D-ribose-binding residues include aspartate 93, isoleucine 94, and asparagine 107. 3 residues coordinate Zn(2+): cysteine 113, histidine 118, and cysteine 120. ADP-D-ribose-binding residues include cysteine 120, isoleucine 121, aspartate 122, serine 212, threonine 213, glycine 214, and phenylalanine 216.

Belongs to the MacroD-type family. Zn-Macro subfamily. In terms of assembly, monomer. Directly interacts with the lipoylated form of GcvH-L. It depends on Zn(2+) as a cofactor.

It catalyses the reaction 4-O-(ADP-D-ribosyl)-L-aspartyl-[protein] + H2O = L-aspartyl-[protein] + ADP-D-ribose + H(+). Functionally, ADP-ribosylhydrolase that specifically reverses the SirTM-mediated mono-ADP-ribosylation at an asparatate residue of GcvH-L (SAV0324), by releasing ADP-ribose from the target protein. May play a role in the regulation of the response to host-induced oxidative stress. The sequence is that of Protein-ADP-ribose hydrolase from Staphylococcus aureus (strain Mu50 / ATCC 700699).